Here is a 559-residue protein sequence, read N- to C-terminus: Formate--tetrahydrofolate ligase (559 aa).

An ATP-binding site is contributed by 68 to 75; it reads TPAGEGKT.

Belongs to the formate--tetrahydrofolate ligase family.

The catalysed reaction is (6S)-5,6,7,8-tetrahydrofolate + formate + ATP = (6R)-10-formyltetrahydrofolate + ADP + phosphate. The protein operates within one-carbon metabolism; tetrahydrofolate interconversion. This Rhizobium etli (strain ATCC 51251 / DSM 11541 / JCM 21823 / NBRC 15573 / CFN 42) protein is Formate--tetrahydrofolate ligase.